Here is a 355-residue protein sequence, read N- to C-terminus: Histidinol-phosphate aminotransferase (355 aa).

The residue at position 218 (Lys218) is an N6-(pyridoxal phosphate)lysine.

This sequence belongs to the class-II pyridoxal-phosphate-dependent aminotransferase family. Histidinol-phosphate aminotransferase subfamily. As to quaternary structure, homodimer. It depends on pyridoxal 5'-phosphate as a cofactor.

The catalysed reaction is L-histidinol phosphate + 2-oxoglutarate = 3-(imidazol-4-yl)-2-oxopropyl phosphate + L-glutamate. It participates in amino-acid biosynthesis; L-histidine biosynthesis; L-histidine from 5-phospho-alpha-D-ribose 1-diphosphate: step 7/9. This chain is Histidinol-phosphate aminotransferase, found in Pelodictyon phaeoclathratiforme (strain DSM 5477 / BU-1).